We begin with the raw amino-acid sequence, 381 residues long: L-lactate dehydrogenase (381 aa).

One can recognise an FMN hydroxy acid dehydrogenase domain in the interval 1–380 (MIISSASDYR…KPEALVDLSK (380 aa)). Tyr-24 is a binding site for substrate. Positions 106 and 127 each coordinate FMN. Tyr-129 contacts substrate. FMN is bound at residue Thr-155. Position 164 (Arg-164) interacts with substrate. Lys-251 is a binding site for FMN. The active-site Proton acceptor is the His-275. Arg-278 lines the substrate pocket. 306-330 (DSGIRNGLDIVRMLALGADATMLGR) serves as a coordination point for FMN.

This sequence belongs to the FMN-dependent alpha-hydroxy acid dehydrogenase family. FMN serves as cofactor.

It localises to the cell inner membrane. It carries out the reaction (S)-lactate + A = pyruvate + AH2. Catalyzes the conversion of L-lactate to pyruvate. Is coupled to the respiratory chain. This chain is L-lactate dehydrogenase, found in Haemophilus influenzae (strain 86-028NP).